Reading from the N-terminus, the 142-residue chain is Succinate dehydrogenase subunit 6, mitochondrial (142 aa).

Component of complex II composed of eight subunits in plants: four classical SDH subunits SDH1, SDH2, SDH3 and SDH4 (a flavoprotein (FP), an iron-sulfur protein (IP), and a cytochrome b composed of a large and a small subunit.), as well as four subunits unknown in mitochondria from bacteria and heterotrophic eukaryotes.

It localises to the mitochondrion inner membrane. The protein operates within carbohydrate metabolism; tricarboxylic acid cycle. The sequence is that of Succinate dehydrogenase subunit 6, mitochondrial from Oryza sativa subsp. japonica (Rice).